The sequence spans 423 residues: Serine--tRNA ligase (423 aa).

Residue 230-232 (TAE) participates in L-serine binding. 261–263 (RAE) serves as a coordination point for ATP. E284 contacts L-serine. An ATP-binding site is contributed by 348–351 (EISS). Residue S384 participates in L-serine binding.

It belongs to the class-II aminoacyl-tRNA synthetase family. Type-1 seryl-tRNA synthetase subfamily. In terms of assembly, homodimer. The tRNA molecule binds across the dimer.

The protein localises to the cytoplasm. The enzyme catalyses tRNA(Ser) + L-serine + ATP = L-seryl-tRNA(Ser) + AMP + diphosphate + H(+). It catalyses the reaction tRNA(Sec) + L-serine + ATP = L-seryl-tRNA(Sec) + AMP + diphosphate + H(+). The protein operates within aminoacyl-tRNA biosynthesis; selenocysteinyl-tRNA(Sec) biosynthesis; L-seryl-tRNA(Sec) from L-serine and tRNA(Sec): step 1/1. In terms of biological role, catalyzes the attachment of serine to tRNA(Ser). Is also able to aminoacylate tRNA(Sec) with serine, to form the misacylated tRNA L-seryl-tRNA(Sec), which will be further converted into selenocysteinyl-tRNA(Sec). In Acetivibrio thermocellus (strain ATCC 27405 / DSM 1237 / JCM 9322 / NBRC 103400 / NCIMB 10682 / NRRL B-4536 / VPI 7372) (Clostridium thermocellum), this protein is Serine--tRNA ligase.